We begin with the raw amino-acid sequence, 383 residues long: MRSSQNGGAMGGRAAGTGGGGPSAPVDKEVDYAQYFCTYSFLYHQKDMLSDRVRMDAYFNAVFQNKHHFEGKTVLDVGTGSGILAIWSAQAGARKVYAVEATKMADHARALVKANNLDHIVEVIEGSVEDISLPEKVDVIISEWMGYFLLRESMFDSVISARDRWLKPTGVMYPSHARMWLAPIKSNIADRKRNDFDGAMADWHNFSDEIKSYYGVDMGVLTKPFAEEQEKYYIQTAMWNDLNPQQIIGTPTIVKEMDCLTASVSEIEEVRSNVTSVINMEHTRLCGFGGWFDVQFSGRKEDPAQQEIELTTAPSEQHCTHWGQQVFIMSNPINVEEGDNLNLGLLMSRSKENHRLMEIELNCEIKEASGNPKESFKKTYFIE.

The interval 1-23 (MRSSQNGGAMGGRAAGTGGGGPS) is disordered. A compositionally biased stretch (gly residues) spans 8 to 22 (GAMGGRAAGTGGGGP). Positions 29–360 (EVDYAQYFCT…KENHRLMEIE (332 aa)) constitute an SAM-dependent MTase PRMT-type domain. S-adenosyl-L-methionine contacts are provided by Gln-45, Arg-54, Gly-78, Glu-100, and Glu-129. Catalysis depends on residues Glu-143 and Glu-152. The dimerization arm stretch occupies residues 190–230 (DRKRNDFDGAMADWHNFSDEIKSYYGVDMGVLTKPFAEEQE).

The protein belongs to the class I-like SAM-binding methyltransferase superfamily. Protein arginine N-methyltransferase family. Ring-like homodimer.

It carries out the reaction L-arginyl-[protein] + 2 S-adenosyl-L-methionine = N(omega),N(omega)-dimethyl-L-arginyl-[protein] + 2 S-adenosyl-L-homocysteine + 2 H(+). In terms of biological role, methylates (mono and asymmetric dimethylation) the guanidino nitrogens of arginyl residues in some proteins. Essential for regulating flowering time. In Arabidopsis thaliana (Mouse-ear cress), this protein is Protein arginine N-methyltransferase PRMT10 (PRMT10).